We begin with the raw amino-acid sequence, 95 residues long: Aspartyl/glutamyl-tRNA(Asn/Gln) amidotransferase subunit C (95 aa).

This sequence belongs to the GatC family. In terms of assembly, heterotrimer of A, B and C subunits.

The catalysed reaction is L-glutamyl-tRNA(Gln) + L-glutamine + ATP + H2O = L-glutaminyl-tRNA(Gln) + L-glutamate + ADP + phosphate + H(+). It carries out the reaction L-aspartyl-tRNA(Asn) + L-glutamine + ATP + H2O = L-asparaginyl-tRNA(Asn) + L-glutamate + ADP + phosphate + 2 H(+). Allows the formation of correctly charged Asn-tRNA(Asn) or Gln-tRNA(Gln) through the transamidation of misacylated Asp-tRNA(Asn) or Glu-tRNA(Gln) in organisms which lack either or both of asparaginyl-tRNA or glutaminyl-tRNA synthetases. The reaction takes place in the presence of glutamine and ATP through an activated phospho-Asp-tRNA(Asn) or phospho-Glu-tRNA(Gln). This chain is Aspartyl/glutamyl-tRNA(Asn/Gln) amidotransferase subunit C, found in Brucella abortus (strain S19).